The following is a 129-amino-acid chain: Small ribosomal subunit protein uS12 (129 aa).

Asp-89 carries the 3-methylthioaspartic acid modification. Residues 101–129 (TLDTSGVSDRKQSRSKYGAKQPKAVAAKK) are disordered.

Belongs to the universal ribosomal protein uS12 family. As to quaternary structure, part of the 30S ribosomal subunit. Contacts proteins S8 and S17. May interact with IF1 in the 30S initiation complex.

With S4 and S5 plays an important role in translational accuracy. Functionally, interacts with and stabilizes bases of the 16S rRNA that are involved in tRNA selection in the A site and with the mRNA backbone. Located at the interface of the 30S and 50S subunits, it traverses the body of the 30S subunit contacting proteins on the other side and probably holding the rRNA structure together. The combined cluster of proteins S8, S12 and S17 appears to hold together the shoulder and platform of the 30S subunit. The sequence is that of Small ribosomal subunit protein uS12 from Chlorobium luteolum (strain DSM 273 / BCRC 81028 / 2530) (Pelodictyon luteolum).